A 138-amino-acid polypeptide reads, in one-letter code: MSLNRHMIREEAFQVLFALQSDSEADIQTVYEAIPHHDEKQIPPYLLTLVNGVREHQDQLDEQINDLLASGWTINRLAKPDLVILRLALFEIQYAENVPTVVAINEALELTKTFSSDKSRKFINGALGKFEKQVNENN.

It belongs to the NusB family.

Involved in transcription antitermination. Required for transcription of ribosomal RNA (rRNA) genes. Binds specifically to the boxA antiterminator sequence of the ribosomal RNA (rrn) operons. This Limosilactobacillus reuteri (strain DSM 20016) (Lactobacillus reuteri) protein is Transcription antitermination protein NusB.